The chain runs to 618 residues: Dihydroxy-acid dehydratase (618 aa).

Mg(2+) is bound at residue D81. Residue C122 coordinates [2Fe-2S] cluster. 2 residues coordinate Mg(2+): D123 and K124. K124 is subject to N6-carboxylysine. C195 is a binding site for [2Fe-2S] cluster. Position 491 (E491) interacts with Mg(2+). S517 functions as the Proton acceptor in the catalytic mechanism.

The protein belongs to the IlvD/Edd family. As to quaternary structure, homodimer. Requires [2Fe-2S] cluster as cofactor. Mg(2+) is required as a cofactor.

It carries out the reaction (2R)-2,3-dihydroxy-3-methylbutanoate = 3-methyl-2-oxobutanoate + H2O. It catalyses the reaction (2R,3R)-2,3-dihydroxy-3-methylpentanoate = (S)-3-methyl-2-oxopentanoate + H2O. It participates in amino-acid biosynthesis; L-isoleucine biosynthesis; L-isoleucine from 2-oxobutanoate: step 3/4. It functions in the pathway amino-acid biosynthesis; L-valine biosynthesis; L-valine from pyruvate: step 3/4. Functions in the biosynthesis of branched-chain amino acids. Catalyzes the dehydration of (2R,3R)-2,3-dihydroxy-3-methylpentanoate (2,3-dihydroxy-3-methylvalerate) into 2-oxo-3-methylpentanoate (2-oxo-3-methylvalerate) and of (2R)-2,3-dihydroxy-3-methylbutanoate (2,3-dihydroxyisovalerate) into 2-oxo-3-methylbutanoate (2-oxoisovalerate), the penultimate precursor to L-isoleucine and L-valine, respectively. In Dechloromonas aromatica (strain RCB), this protein is Dihydroxy-acid dehydratase.